Here is a 922-residue protein sequence, read N- to C-terminus: Golgi-associated RAB2 interactor protein 5B (922 aa).

6 disordered regions span residues 244–264 (DVRK…DRTH), 292–317 (QSSP…SPSH), 373–404 (TPYS…KAPS), 424–597 (AVPA…TQET), 758–830 (QPES…LRPS), and 842–869 (ATAR…LATV). Polar residues predominate over residues 292–305 (QSSPKACTSASDEA). The span at 431-441 (KPPPGLAPPQK) shows a compositional bias: pro residues. Composition is skewed to low complexity over residues 442 to 458 (APAA…VPAP) and 471 to 495 (KAPA…ASAV). Pro residues predominate over residues 496 to 507 (PAPPQKTPPPSQ). Basic and acidic residues predominate over residues 758 to 788 (QPESHTWVKEGKRPWGEMKEQPWGEMKEPPW).

Belongs to the GARIN family.

The protein is Golgi-associated RAB2 interactor protein 5B of Homo sapiens (Human).